Consider the following 236-residue polypeptide: 2,3,4,5-tetrahydropyridine-2,6-dicarboxylate N-acetyltransferase (236 aa).

This sequence belongs to the transferase hexapeptide repeat family. DapH subfamily.

It catalyses the reaction (S)-2,3,4,5-tetrahydrodipicolinate + acetyl-CoA + H2O = L-2-acetamido-6-oxoheptanedioate + CoA. The protein operates within amino-acid biosynthesis; L-lysine biosynthesis via DAP pathway; LL-2,6-diaminopimelate from (S)-tetrahydrodipicolinate (acetylase route): step 1/3. Its function is as follows. Catalyzes the transfer of an acetyl group from acetyl-CoA to tetrahydrodipicolinate. This is 2,3,4,5-tetrahydropyridine-2,6-dicarboxylate N-acetyltransferase from Clostridium botulinum (strain Eklund 17B / Type B).